Reading from the N-terminus, the 1101-residue chain is Furin-like protease 1, isoform 1-CRR (1101 aa).

Residues 1 to 57 (MKNDVVRWSRQPTSNTTNSSSSSRSDSNSTHKHRSKSNKLNARQLGSNAARSCQQRS) form a disordered region. A compositionally biased stretch (low complexity) spans 13 to 28 (TSNTTNSSSSSRSDSN). N-linked (GlcNAc...) asparagine glycans are attached at residues Asn-15, Asn-18, and Asn-28. Positions 38–57 (NKLNARQLGSNAARSCQQRS) are enriched in polar residues. Residue Asn-108 is glycosylated (N-linked (GlcNAc...) asparagine). Residues 119 to 139 (VFLLALQFSAVVFLCNINVGF) traverse the membrane as a helical segment. The segment covering 150 to 163 (SAGGSSPAAPSSAP) has biased composition (low complexity). Residues 150-187 (SAGGSSPAAPSSAPSSPPTVAVPPPPPPSSALKVDPNG) are disordered. The span at 164–178 (SSPPTVAVPPPPPPS) shows a compositional bias: pro residues. The N-linked (GlcNAc...) asparagine glycan is linked to Asn-333. Residues 340–654 (MWYLNRGGGL…YGLMDAAEMV (315 aa)) enclose the Peptidase S8 domain. Active-site charge relay system residues include Asp-372 and His-413. N-linked (GlcNAc...) asparagine glycosylation is present at Asn-426. Intrachain disulfides connect Cys-430–Cys-579 and Cys-522–Cys-552. Catalysis depends on Ser-587, which acts as the Charge relay system. Asn-606 carries N-linked (GlcNAc...) asparagine glycosylation. In terms of domain architecture, P/Homo B spans 662–791 (AVPEQQRCEI…DMIFYGTETP (130 aa)). A disulfide bond links Cys-669 and Cys-695. Residues Asn-727 and Asn-859 are each glycosylated (N-linked (GlcNAc...) asparagine). Residues 886–915 (EEDEQDDEVTRGPVNPYSSSPMDHSLLMSN) are disordered. Residues 901-915 (PYSSSPMDHSLLMSN) show a composition bias toward polar residues. Asn-978 carries N-linked (GlcNAc...) asparagine glycosylation. A helical transmembrane segment spans residues 1014–1034 (TVLLLVSVIFTLMGVAVAGGI).

The protein belongs to the peptidase S8 family. Furin subfamily. It depends on Ca(2+) as a cofactor. In terms of tissue distribution, in adults, isoform 1-CRR is expressed in CNS, fat body, and female reproductive tissues, and in embryos, in anal pads, hindgut, developing antennomaxillary complex, oenocytes, clipeolabrum, pharynx, trachea, CNS and developing posterior spiracles.

The protein localises to the golgi apparatus membrane. The enzyme catalyses Release of mature proteins from their proproteins by cleavage of -Arg-Xaa-Yaa-Arg-|-Zaa- bonds, where Xaa can be any amino acid and Yaa is Arg or Lys. Releases albumin, complement component C3 and von Willebrand factor from their respective precursors.. Furin is likely to represent the ubiquitous endoprotease activity within constitutive secretory pathways and capable of cleavage at the RX(K/R)R consensus motif. This Drosophila melanogaster (Fruit fly) protein is Furin-like protease 1, isoform 1-CRR (Fur1).